The sequence spans 233 residues: Adenosylcobinamide-GDP ribazoletransferase (233 aa).

The next 7 membrane-spanning stretches (helical) occupy residues 24–44 (LWAL…VLYL), 46–66 (LPLS…LLHL), 96–116 (IAGV…LPLL), 117–137 (PFYA…LALA), 158–178 (QLTL…YIEP), 181–198 (ISSL…RLSL), and 209–229 (IGAV…VVWV).

The protein belongs to the CobS family. Mg(2+) serves as cofactor.

Its subcellular location is the cell membrane. The enzyme catalyses alpha-ribazole + adenosylcob(III)inamide-GDP = adenosylcob(III)alamin + GMP + H(+). It catalyses the reaction alpha-ribazole 5'-phosphate + adenosylcob(III)inamide-GDP = adenosylcob(III)alamin 5'-phosphate + GMP + H(+). Its pathway is cofactor biosynthesis; adenosylcobalamin biosynthesis; adenosylcobalamin from cob(II)yrinate a,c-diamide: step 7/7. In terms of biological role, joins adenosylcobinamide-GDP and alpha-ribazole to generate adenosylcobalamin (Ado-cobalamin). Also synthesizes adenosylcobalamin 5'-phosphate from adenosylcobinamide-GDP and alpha-ribazole 5'-phosphate. In Thermococcus gammatolerans (strain DSM 15229 / JCM 11827 / EJ3), this protein is Adenosylcobinamide-GDP ribazoletransferase.